We begin with the raw amino-acid sequence, 258 residues long: Acetylglutamate kinase (258 aa).

Substrate-binding positions include 44-45, Arg-66, and Asn-158; that span reads GG. Residues 181 to 186 and 209 to 211 each bind ATP; these read DVSGIL and IIT.

This sequence belongs to the acetylglutamate kinase family. ArgB subfamily. In terms of assembly, homodimer.

The protein localises to the cytoplasm. The catalysed reaction is N-acetyl-L-glutamate + ATP = N-acetyl-L-glutamyl 5-phosphate + ADP. Its pathway is amino-acid biosynthesis; L-arginine biosynthesis; N(2)-acetyl-L-ornithine from L-glutamate: step 2/4. Catalyzes the ATP-dependent phosphorylation of N-acetyl-L-glutamate. The polypeptide is Acetylglutamate kinase (Citrobacter koseri (strain ATCC BAA-895 / CDC 4225-83 / SGSC4696)).